A 162-amino-acid chain; its full sequence is Caveolin-2 (162 aa).

Topologically, residues 1-86 are cytoplasmic; the sequence is MGLETEKADV…FEISKYVMYK (86 aa). A Phosphotyrosine; by SRC modification is found at Tyr-19. 2 positions are modified to phosphoserine: Ser-20 and Ser-23. Phosphotyrosine; by SRC is present on Tyr-27. At Ser-36 the chain carries Phosphoserine. Positions 87-107 form an intramembrane region, helical; the sequence is FLTVFLAIPLAFLAGILFATL. Over 108–162 the chain is Cytoplasmic; sequence SCLHIWIIMPFVKTCLMVLPSVQTIWKSVTDAIIAPLCTSIGRSFSSVSLQLSQD.

This sequence belongs to the caveolin family. As to quaternary structure, monomer or homodimer. Interacts with CAV1; the interaction forms a stable heterooligomeric complex that is required for targeting to lipid rafts and for caveolae formation. Tyrosine phosphorylated forms do not form heterooligomers with the Tyr-19-phosphorylated form existing as a monomer or dimer, and the Tyr-27-form as a monomer only. Interacts (tyrosine phosphorylated form) with the SH2 domain-containing proteins, RASA1, NCK1 and SRC. Interacts (tyrosine phosphorylated form) with INSR, the interaction (Tyr-27-phosphorylated form) is increased on insulin stimulation. Interacts (Tyr-19 phosphorylated form) with MAPK1 (phosphorylated form); the interaction, promoted by insulin, leads to nuclear location and MAPK1 activation. Interacts with STAT3; the interaction is increased on insulin-induced tyrosine phosphorylation leading to STAT activation. Phosphorylated on serine and tyrosine residues. CAV1 promotes phosphorylation on Ser-23 which then targets the complex to the plasma membrane, lipid rafts and caveolae. Phosphorylation on Ser-36 appears to modulate mitosis in endothelial cells. Phosphorylation on both Tyr-19 and Tyr-27 is required for insulin-induced 'Ser-727' phosphorylation of STAT3 and its activation. Phosphorylation on Tyr-19 is required for insulin-induced phosphorylation of MAPK1 and DNA binding of STAT3. Tyrosine phosphorylation is induced by both EGF and insulin (By. similarity).

Its subcellular location is the nucleus. The protein localises to the cytoplasm. It localises to the golgi apparatus membrane. It is found in the cell membrane. The protein resides in the membrane. Its subcellular location is the caveola. In terms of biological role, may act as a scaffolding protein within caveolar membranes. Interacts directly with G-protein alpha subunits and can functionally regulate their activity. Acts as an accessory protein in conjunction with CAV1 in targeting to lipid rafts and driving caveolae formation. The Ser-36 phosphorylated form has a role in modulating mitosis in endothelial cells. Positive regulator of cellular mitogenesis of the MAPK signaling pathway. Required for the insulin-stimulated nuclear translocation and activation of MAPK1 and STAT3, and the subsequent regulation of cell cycle progression. This chain is Caveolin-2 (CAV2), found in Callithrix jacchus (White-tufted-ear marmoset).